The primary structure comprises 134 residues: Large ribosomal subunit protein uL16c (134 aa).

It belongs to the universal ribosomal protein uL16 family. Part of the 50S ribosomal subunit.

The protein resides in the plastid. Its subcellular location is the chloroplast. The chain is Large ribosomal subunit protein uL16c from Guillardia theta (Cryptophyte).